The chain runs to 376 residues: Putative phosphoserine aminotransferase (376 aa).

Arg-50 provides a ligand contact to L-glutamate. Residues Ala-84–Thr-85, Phe-108, Thr-154, Asp-176, and Gln-199 each bind pyridoxal 5'-phosphate. Lys-200 bears the N6-(pyridoxal phosphate)lysine mark. Asn-251–Thr-252 contributes to the pyridoxal 5'-phosphate binding site.

The protein belongs to the class-V pyridoxal-phosphate-dependent aminotransferase family. SerC subfamily. In terms of assembly, homodimer. Requires pyridoxal 5'-phosphate as cofactor.

It is found in the cytoplasm. The enzyme catalyses O-phospho-L-serine + 2-oxoglutarate = 3-phosphooxypyruvate + L-glutamate. It carries out the reaction 4-(phosphooxy)-L-threonine + 2-oxoglutarate = (R)-3-hydroxy-2-oxo-4-phosphooxybutanoate + L-glutamate. Its pathway is amino-acid biosynthesis; L-serine biosynthesis; L-serine from 3-phospho-D-glycerate: step 2/3. The protein operates within cofactor biosynthesis; pyridoxine 5'-phosphate biosynthesis; pyridoxine 5'-phosphate from D-erythrose 4-phosphate: step 3/5. Catalyzes the reversible conversion of 3-phosphohydroxypyruvate to phosphoserine and of 3-hydroxy-2-oxo-4-phosphonooxybutanoate to phosphohydroxythreonine. The chain is Putative phosphoserine aminotransferase from Mycobacterium bovis (strain ATCC BAA-935 / AF2122/97).